Here is a 155-residue protein sequence, read N- to C-terminus: Transcription antitermination protein NusB (155 aa).

It belongs to the NusB family.

In terms of biological role, involved in transcription antitermination. Required for transcription of ribosomal RNA (rRNA) genes. Binds specifically to the boxA antiterminator sequence of the ribosomal RNA (rrn) operons. In Vibrio campbellii (strain ATCC BAA-1116), this protein is Transcription antitermination protein NusB.